Reading from the N-terminus, the 257-residue chain is Putative pentatricopeptide repeat-containing protein At1g43010 (257 aa).

2 PPR repeats span residues K133–L168 and K169–V203.

It belongs to the PPR family. P subfamily.

This Arabidopsis thaliana (Mouse-ear cress) protein is Putative pentatricopeptide repeat-containing protein At1g43010.